The following is a 125-amino-acid chain: uncharacterized protein (125 aa).

The transit peptide at 1–46 directs the protein to the chloroplast; sequence MFFDTKVLNYPTIHKSISMASTMQRTSSSAASNERQLSQLQRRAPS.

It is found in the plastid. Its subcellular location is the chloroplast. This is an uncharacterized protein from Arabidopsis thaliana (Mouse-ear cress).